A 383-amino-acid polypeptide reads, in one-letter code: S-adenosylmethionine synthase (383 aa).

His-16 contacts ATP. Asp-18 is a Mg(2+) binding site. Glu-44 is a binding site for K(+). L-methionine-binding residues include Glu-57 and Gln-98. Positions Gln-98 to Ile-108 are flexible loop. ATP contacts are provided by residues Asp-158 to Lys-160, Arg-226 to Phe-227, Asp-235, Arg-241 to Lys-242, Ala-258, and Lys-262. L-methionine is bound at residue Asp-235. Lys-266 is a binding site for L-methionine.

Belongs to the AdoMet synthase family. In terms of assembly, homotetramer; dimer of dimers. Mg(2+) serves as cofactor. The cofactor is K(+).

The protein localises to the cytoplasm. It carries out the reaction L-methionine + ATP + H2O = S-adenosyl-L-methionine + phosphate + diphosphate. It participates in amino-acid biosynthesis; S-adenosyl-L-methionine biosynthesis; S-adenosyl-L-methionine from L-methionine: step 1/1. In terms of biological role, catalyzes the formation of S-adenosylmethionine (AdoMet) from methionine and ATP. The overall synthetic reaction is composed of two sequential steps, AdoMet formation and the subsequent tripolyphosphate hydrolysis which occurs prior to release of AdoMet from the enzyme. This chain is S-adenosylmethionine synthase, found in Fusobacterium nucleatum subsp. nucleatum (strain ATCC 25586 / DSM 15643 / BCRC 10681 / CIP 101130 / JCM 8532 / KCTC 2640 / LMG 13131 / VPI 4355).